The primary structure comprises 429 residues: Enolase (429 aa).

Gln-167 contacts (2R)-2-phosphoglycerate. Glu-209 serves as the catalytic Proton donor. Mg(2+) is bound by residues Asp-246, Glu-289, and Asp-316. 4 residues coordinate (2R)-2-phosphoglycerate: Lys-341, Arg-370, Ser-371, and Lys-392. Lys-341 functions as the Proton acceptor in the catalytic mechanism.

Belongs to the enolase family. As to quaternary structure, component of the RNA degradosome, a multiprotein complex involved in RNA processing and mRNA degradation. The cofactor is Mg(2+).

It localises to the cytoplasm. It is found in the secreted. The protein resides in the cell surface. It carries out the reaction (2R)-2-phosphoglycerate = phosphoenolpyruvate + H2O. The protein operates within carbohydrate degradation; glycolysis; pyruvate from D-glyceraldehyde 3-phosphate: step 4/5. Functionally, catalyzes the reversible conversion of 2-phosphoglycerate (2-PG) into phosphoenolpyruvate (PEP). It is essential for the degradation of carbohydrates via glycolysis. The polypeptide is Enolase (Cellvibrio japonicus (strain Ueda107) (Pseudomonas fluorescens subsp. cellulosa)).